We begin with the raw amino-acid sequence, 553 residues long: Aminotransferase FUM8 (553 aa).

The signal sequence occupies residues 1–25 (MSPAPAILALRRVYNFCLLVDEAHG). Asn-480 carries an N-linked (GlcNAc...) asparagine glycan.

This sequence belongs to the class-II pyridoxal-phosphate-dependent aminotransferase family. BioF subfamily. Pyridoxal 5'-phosphate is required as a cofactor.

It is found in the endoplasmic reticulum. It functions in the pathway mycotoxin biosynthesis. Functionally, aminotransferase; part of the gene cluster that mediates the biosynthesis of fumonisins B1 (FB1), B2 (FB2), B3 (FB3), and B4 (FB4), which are carcinogenic mycotoxins. Within the pathway, FUM8 catalyzes the release of the C-18 polyketide chain from the highly reducing polyketide synthase FUM1 by a nucleophilic attack of a carbanion, which is derived from R-carbon of alanine by decarboxylation, on the carbonyl carbon of polyketide acyl chain. The biosynthesis starts with the FUM1-catalyzed carbon chain assembly from one molecule of acetyl-CoA, eight molecules of malonyl-CoA, and two molecules of methionine (in S-adenosyl form). The C18 polyketide chain is released from the enzyme by a nucleophilic attack of a carbanion, which is derived from R-carbon of alanine by decarboxylation, on the carbonyl carbon of polyketide acyl chain. This step is catalyzed by the pyridoxal 5'-phosphate-dependent aminoacyl transferase FUM8. The resultant 3-keto intermediate is then stereospecifically reduced to a 3-hydroxyl product by reductase FUM13. Subsequent oxidations at C-10 by the cytochrome P450 monooxygenase FUM2, C-14 and C-15 by FUM6, FUM12 or FUM15, tricarballylic esterification of the hydroxyl groups on C-14 and C-15 by acyltransferase FUM14, and C-5 hydroxylation by 2-keto-glutarate-dependent dioxygenase FUM3 furnish the biosynthesis of fumonisins. The tricarballylic moieties are most likely derived from the citric acid cycle, and their addition to the carbon backbone may involve FUM7, FUM10, FUM11 and FUM14. This chain is Aminotransferase FUM8, found in Gibberella moniliformis (strain M3125 / FGSC 7600) (Maize ear and stalk rot fungus).